The sequence spans 122 residues: Large ribosomal subunit protein uL14 (122 aa).

Belongs to the universal ribosomal protein uL14 family. As to quaternary structure, part of the 50S ribosomal subunit. Forms a cluster with proteins L3 and L19. In the 70S ribosome, L14 and L19 interact and together make contacts with the 16S rRNA in bridges B5 and B8.

Its function is as follows. Binds to 23S rRNA. Forms part of two intersubunit bridges in the 70S ribosome. The chain is Large ribosomal subunit protein uL14 from Kineococcus radiotolerans (strain ATCC BAA-149 / DSM 14245 / SRS30216).